The primary structure comprises 140 residues: NTF2-related export protein 1 (140 aa).

A2 carries the post-translational modification N-acetylalanine. The NTF2 domain occupies 16-135 (AAEEFVNVYY…WKIASDCFRF (120 aa)).

In terms of assembly, heterodimer with NXF1. Forms a complex with RANGAP1, RANBP2/NUP358 and NXF1. Interacts (via NTF2 domain) with NXF1. Stabilizes the NTF2 domain of NXF1 by heterodimerization. The formation of NXF1-NXT1 heterodimers is required for the NXF1-mediated nuclear mRNA export. Preferentially binds Ran-GTP. Associates with NXF2, NXF3 and NXF5. Does not bind nucleoporins (NPC) directly, its association to NPC is mediated by NXF1.

The protein resides in the nucleus. Its subcellular location is the nucleus speckle. The protein localises to the cytoplasm. Its function is as follows. Stimulator of protein export for NES-containing proteins. Also plays a role in the nuclear export of U1 snRNA, tRNA, and mRNA. The NXF1-NXT1 heterodimer is involved in the export of HSP70 mRNA in conjunction with ALYREF/THOC4 and THOC5. The sequence is that of NTF2-related export protein 1 (NXT1) from Bos taurus (Bovine).